We begin with the raw amino-acid sequence, 203 residues long: RNA annealing protein YRA2 (203 aa).

M1 is modified (N-acetylmethionine). Disordered stretches follow at residues 1–60 (MDKA…REEP) and 137–203 (QPQR…YMKG). Positions 11–20 (NSHTDSSSNH) are enriched in polar residues. Over residues 47–60 (SRSKDRLYREREEP) the composition is skewed to basic and acidic residues. Positions 64 to 138 (KRIRISKIPL…AKIEVEIYQP (75 aa)) constitute an RRM domain. Composition is skewed to basic residues over residues 139–153 (QRKH…RRKQ) and 161–180 (GRPG…KNKG).

Belongs to the YRA1 family. Associates with mRNPs. Interacts with YRA1.

Its subcellular location is the nucleus. Functionally, involved in export of poly(A) mRNAs from the nucleus. Recruited to the coding sequences as well as poly-A sites of active genes. The sequence is that of RNA annealing protein YRA2 (YRA2) from Saccharomyces cerevisiae (strain JAY291) (Baker's yeast).